The sequence spans 210 residues: Probable nicotinate-nucleotide adenylyltransferase (210 aa).

The protein belongs to the NadD family.

The enzyme catalyses nicotinate beta-D-ribonucleotide + ATP + H(+) = deamido-NAD(+) + diphosphate. It functions in the pathway cofactor biosynthesis; NAD(+) biosynthesis; deamido-NAD(+) from nicotinate D-ribonucleotide: step 1/1. Functionally, catalyzes the reversible adenylation of nicotinate mononucleotide (NaMN) to nicotinic acid adenine dinucleotide (NaAD). This Methylococcus capsulatus (strain ATCC 33009 / NCIMB 11132 / Bath) protein is Probable nicotinate-nucleotide adenylyltransferase.